We begin with the raw amino-acid sequence, 256 residues long: Hydroxyacylglutathione hydrolase (256 aa).

Zn(2+) is bound by residues His-57, His-59, Asp-61, His-62, His-115, Asp-134, and His-172.

The protein belongs to the metallo-beta-lactamase superfamily. Glyoxalase II family. In terms of assembly, monomer. Zn(2+) is required as a cofactor.

The enzyme catalyses an S-(2-hydroxyacyl)glutathione + H2O = a 2-hydroxy carboxylate + glutathione + H(+). It functions in the pathway secondary metabolite metabolism; methylglyoxal degradation; (R)-lactate from methylglyoxal: step 2/2. Its function is as follows. Thiolesterase that catalyzes the hydrolysis of S-D-lactoyl-glutathione to form glutathione and D-lactic acid. This is Hydroxyacylglutathione hydrolase from Jannaschia sp. (strain CCS1).